The chain runs to 241 residues: MEAGMAEAGVKLEDSWKHVLSGEFASPYMQKLKEFLLAEKTAGKRIFPKGAEYFRALDLTPLDEVKVVILGQDPYHGLGQAHGLCFSVQPGVRIPPSLVNIYKELQSDLGIRPVKHGFLESWAKQGVLLLNSVLTVEEARAASHQGQGWEKFTDAVIRAVNDECDHVVFLLWGSYAQKKAAFVDQRKHLVLRSPHPSPLSAHNGFFGNGHFSKANAFLVSHGRDPIDWQLPDVVEGDKNLL.

The active-site Proton acceptor is Asp-73.

This sequence belongs to the uracil-DNA glycosylase (UDG) superfamily. UNG family.

Its subcellular location is the cytoplasm. The catalysed reaction is Hydrolyzes single-stranded DNA or mismatched double-stranded DNA and polynucleotides, releasing free uracil.. In terms of biological role, excises uracil residues from the DNA which can arise as a result of misincorporation of dUMP residues by DNA polymerase or due to deamination of cytosine. This is Uracil-DNA glycosylase from Agrobacterium fabrum (strain C58 / ATCC 33970) (Agrobacterium tumefaciens (strain C58)).